The primary structure comprises 159 residues: Probable chemoreceptor glutamine deamidase CheD 1 (159 aa).

The protein belongs to the CheD family.

The enzyme catalyses L-glutaminyl-[protein] + H2O = L-glutamyl-[protein] + NH4(+). Functionally, probably deamidates glutamine residues to glutamate on methyl-accepting chemotaxis receptors (MCPs), playing an important role in chemotaxis. The polypeptide is Probable chemoreceptor glutamine deamidase CheD 1 (Methanosarcina acetivorans (strain ATCC 35395 / DSM 2834 / JCM 12185 / C2A)).